The sequence spans 213 residues: Golgi SNAP receptor complex member 2 homolog memb-1 (213 aa).

Residues 1 to 189 are Cytoplasmic-facing; it reads MEALYQSTNF…QVIDRRVRED (189 aa). A helical; Anchor for type IV membrane protein membrane pass occupies residues 190–210; that stretch reads WILFVIGCIVCCIFMYAFYRF. Residues 211 to 213 are Vesicular-facing; the sequence is WRG.

The protein belongs to the GOSR2 family. In terms of assembly, part of a unique SNARE complex.

The protein localises to the golgi apparatus. It localises to the cis-Golgi network membrane. Its subcellular location is the golgi apparatus membrane. The protein resides in the endoplasmic reticulum membrane. Functionally, involved in transport of proteins from the cis/medial-Golgi to the trans-Golgi network. This Caenorhabditis elegans protein is Golgi SNAP receptor complex member 2 homolog memb-1.